Reading from the N-terminus, the 145-residue chain is 3-dehydroquinate dehydratase (145 aa).

Residue Tyr23 is the Proton acceptor of the active site. Asn75, His81, and Asp88 together coordinate substrate. The Proton donor role is filled by His101. Residues 102 to 103 (IS) and Arg112 contribute to the substrate site.

It belongs to the type-II 3-dehydroquinase family. Homododecamer.

It catalyses the reaction 3-dehydroquinate = 3-dehydroshikimate + H2O. It functions in the pathway metabolic intermediate biosynthesis; chorismate biosynthesis; chorismate from D-erythrose 4-phosphate and phosphoenolpyruvate: step 3/7. In terms of biological role, catalyzes a trans-dehydration via an enolate intermediate. The chain is 3-dehydroquinate dehydratase from Caldicellulosiruptor bescii (strain ATCC BAA-1888 / DSM 6725 / KCTC 15123 / Z-1320) (Anaerocellum thermophilum).